The sequence spans 217 residues: Guanylate kinase (217 aa).

In terms of domain architecture, Guanylate kinase-like spans 15–194 (GLMLVLSSPS…AYQRLKRILL (180 aa)). 22 to 29 (SPSGAGKT) is a binding site for ATP.

It belongs to the guanylate kinase family.

It is found in the cytoplasm. It carries out the reaction GMP + ATP = GDP + ADP. Essential for recycling GMP and indirectly, cGMP. In Hyphomonas neptunium (strain ATCC 15444), this protein is Guanylate kinase.